A 117-amino-acid chain; its full sequence is Large ribosomal subunit protein bL19 (117 aa).

The protein belongs to the bacterial ribosomal protein bL19 family.

Functionally, this protein is located at the 30S-50S ribosomal subunit interface and may play a role in the structure and function of the aminoacyl-tRNA binding site. In Rhodopirellula baltica (strain DSM 10527 / NCIMB 13988 / SH1), this protein is Large ribosomal subunit protein bL19.